The sequence spans 151 residues: Ubiquitin-conjugating enzyme E2 W (151 aa).

One can recognise a UBC core domain in the interval 3-151 (SMQKRLQKEL…TKWWYHDDTC (149 aa)). Cys-91 acts as the Glycyl thioester intermediate in catalysis.

This sequence belongs to the ubiquitin-conjugating enzyme family.

It localises to the nucleus. The catalysed reaction is S-ubiquitinyl-[E1 ubiquitin-activating enzyme]-L-cysteine + [E2 ubiquitin-conjugating enzyme]-L-cysteine = [E1 ubiquitin-activating enzyme]-L-cysteine + S-ubiquitinyl-[E2 ubiquitin-conjugating enzyme]-L-cysteine.. It catalyses the reaction S-ubiquitinyl-[E1 ubiquitin-activating enzyme]-L-cysteine + [acceptor protein]-N-terminal-amino acid = [E1 ubiquitin-activating enzyme]-L-cysteine + N-terminal-ubiquitinyl-[acceptor protein].. It participates in protein modification; protein ubiquitination. Its function is as follows. Accepts ubiquitin from the E1 complex and catalyzes its covalent attachment to other proteins. Catalyzes monoubiquitination. Involved in degradation of misfolded chaperone substrate and DNA repair. This Xenopus tropicalis (Western clawed frog) protein is Ubiquitin-conjugating enzyme E2 W (ube2w).